The sequence spans 1032 residues: Suppression of tumorigenicity 18 protein (1032 aa).

Disordered stretches follow at residues 29 to 76 (RAEE…TNDH), 162 to 213 (GRDK…LTYN), and 325 to 354 (RQPKVTDASGRQIFNNKHSPRPERREAKCP). Basic residues predominate over residues 40–51 (NKRKSLLMKPRH). A compositionally biased stretch (basic and acidic residues) spans 52–76 (YSPDMDCKENPDNRNEDDGLETNDH). CCHHC-type zinc fingers lie at residues 344-387 (PRPE…PLEI), 388-431 (LAMH…KLAM), 700-743 (RDLK…LKSL), 744-787 (MAAN…GIKM), 792-835 (EEKE…QKEN), and 845-888 (KLNK…IKKV). Zn(2+) contacts are provided by C353, C358, H371, C377, C397, C402, H415, C421, C709, C714, H727, C733, C753, C758, H771, C777, C801, C806, H819, C825, C854, C859, H872, and C878. Residues 905–974 (IEGDEEIRHL…KELAGLSQAL (70 aa)) are a coiled coil.

Belongs to the MYT1 family. As to expression, detected in brain.

Its subcellular location is the nucleus. In terms of biological role, repressor that binds to DNA sequences containing a bipartite element consisting of a direct repeat of the sequence 5'-AAAGTTT-3' separated by 2-9 nucleotides. Represses basal transcription activity from target promoters. The polypeptide is Suppression of tumorigenicity 18 protein (St18) (Rattus norvegicus (Rat)).